The chain runs to 345 residues: Ananain (345 aa).

A signal peptide spans 1 to 24 (MTSKVQLVFLFLFLCVMWASPSAA). Positions 25 to 122 (SCDEPSDPMM…VSFDDVDISS (98 aa)) are cleaved as a propeptide — activation peptide. 3 disulfides stabilise this stretch: Cys144-Cys184, Cys178-Cys217, and Cys273-Cys325. Residue Cys147 is part of the active site. E64 is bound at residue Cys147. Catalysis depends on residues His279 and Asn300.

In terms of tissue distribution, stem (at protein level).

The enzyme catalyses Hydrolysis of proteins with broad specificity for peptide bonds. Best reported small molecule substrate Bz-Phe-Val-Arg-|-NHMec, but broader specificity than fruit bromelain.. Strongly inhibited by chicken egg-white cystatin. Inhibited by iodoacetamide and the active-site-directed inhibitor E64 (L-trans-epoxysuccinyl-leucylamide-(4-guanido)-butane). Cysteine protease. Displays a high level of diversity in substrate specificity at the P1-P1' cleavage site. A hydrophilic P1 residue is preferred, with Gln or Arg strongly preferred. Favors an Ile/Leu residue at the P2 position of substrates, with an overall higher preference for Leu. The optimal tripeptide for cleavage is Pro-Leu-Gln, with cleavage occurring after the Gln residue. Another optimal tripeptide is Val-Leu-Arg, which may imply that a hydrophobic residue at the P3 position of substrates is preferred. This is Ananain from Ananas comosus (Pineapple).